The sequence spans 436 residues: UPF0597 protein YhaM (436 aa).

This sequence belongs to the UPF0597 family.

In Salmonella dublin (strain CT_02021853), this protein is UPF0597 protein YhaM.